We begin with the raw amino-acid sequence, 395 residues long: MSEQADKCNSRWKDEAMQNGYIPSYLDKDELCVVCGDKATGYHYRCITCEGCKGFFRRTIQKNLNPTYACKYEGKCVIDKVTRNQCQECRFKKCIAVGMATDLVLDDSKRLAKRKLIEENRERRRREELQKTVWDRPEPTQEEWEMIRVVTEAHMATNAQGNHWKQKRKFLSAVGVKEAKPEDIGSAPIVNAPEGNKVDIEAFSQFTKIITPAITRVVDFAKKLPMFCELPCEDQIILLKGCCMEIMSLRAAVRYDPESDTLTLNGEMAVTRGQLKNGGLGVVSDAIFDLGVSLSSFNLDDSEVALLQAVILLSSDRPGLTSVERIERCQEEFLLAFEHYINYRKHKVAHFWPKLLMKVTDLRMIGACHASRFLHMKVECPTELFPPLFLEVFED.

A modulating region spans residues M1–L31. Positions D29–D106 form a DNA-binding region, nuclear receptor. Zn(2+) is bound by residues C32, C35, C49, C52, C70, C76, C86, and C89. NR C4-type zinc fingers lie at residues C32–C52 and C70–C89. The region spanning E142 to D395 is the NR LBD domain. 3 residues coordinate 3,3',5-triiodo-L-thyronine: R216, N265, and H369.

The protein belongs to the nuclear hormone receptor family. NR1 subfamily. As to quaternary structure, interacts (via the ligand-binding domain) with ncoa2. In terms of tissue distribution, widely expressed in a range of adult tissues including the brain, eye, fin, gill, intestine, liver, swim bladder and ovary. In the eye, expressed in the outer nuclear layer of the retina.

Its subcellular location is the nucleus. In terms of biological role, nuclear hormone receptor that can act as a repressor or activator of transcription. High affinity receptor for the thyroid gland hormone triiodothyronine (T3). Transactivating activity is ligand-dependent, and is repressed in the absence of T3. The sequence is that of Thyroid hormone receptor beta (thrb) from Danio rerio (Zebrafish).